The following is a 296-amino-acid chain: Ribosomal RNA small subunit methyltransferase H (296 aa).

S-adenosyl-L-methionine is bound by residues 30 to 32 (GGH), Asp-49, Phe-76, Asp-97, and Gln-104.

This sequence belongs to the methyltransferase superfamily. RsmH family.

Its subcellular location is the cytoplasm. The catalysed reaction is cytidine(1402) in 16S rRNA + S-adenosyl-L-methionine = N(4)-methylcytidine(1402) in 16S rRNA + S-adenosyl-L-homocysteine + H(+). Specifically methylates the N4 position of cytidine in position 1402 (C1402) of 16S rRNA. The chain is Ribosomal RNA small subunit methyltransferase H from Mesomycoplasma hyopneumoniae (strain 232) (Mycoplasma hyopneumoniae).